A 223-amino-acid chain; its full sequence is Golgi SNAP receptor complex member 1-1 (223 aa).

Topologically, residues 1-201 (MDVPSSWDAL…AAIKRKKSMD (201 aa)) are cytoplasmic. Residues 8–67 (DALRKQARKIEAQLDEQMHSYRRLVSTKALSKSDGNESDLEAGIDLLLRQLQQVNAQMQA) are a coiled coil. Residues 202–222 (TIILSLVAAVCTFLIFIYWIT) form a helical; Anchor for type IV membrane protein membrane-spanning segment. A topological domain (vesicular) is located at residue Lys-223.

Belongs to the GOSR1 family. Component of several multiprotein Golgi SNARE complexes.

Its subcellular location is the golgi apparatus membrane. In terms of biological role, involved in transport from the ER to the Golgi apparatus as well as in intra-Golgi transport. It belongs to a super-family of proteins called t-SNAREs or soluble NSF (N-ethylmaleimide-sensitive factor) attachment protein receptor. The protein is Golgi SNAP receptor complex member 1-1 (GOS11) of Arabidopsis thaliana (Mouse-ear cress).